The following is a 586-amino-acid chain: ATPase family AAA domain-containing protein 3 (586 aa).

Residues 1–52 form a disordered region; that stretch reads MSWLFGIKGSKGEGTGPPLPLPPVQPGGEGSGDGGAGDRPGPKDKWSNFDPT. S2 carries the N-acetylserine modification. A required for interaction with the inner surface of the mitochondrial outer membrane region spans residues 2–49; sequence SWLFGIKGSKGEGTGPPLPLPPVQPGGEGSGDGGAGDRPGPKDKWSNF. At 2–245 the chain is on the mitochondrial intermembrane side; sequence SWLFGIKGSK…FRAFVTDWDK (244 aa). Residues 27 to 38 are compositionally biased toward gly residues; it reads GGEGSGDGGAGD. Positions 55 to 218 form a coiled coil; it reads ERAAKAAREL…QIRLKAAEHR (164 aa). A helical transmembrane segment spans residues 246–262; sequence VTATVAGLTLLAVGIYS. The Mitochondrial matrix segment spans residues 263-586; sequence AKNATSVAGR…QPPTLRTQAE (324 aa). The segment at 289 to 304 is S100B-binding; it reads RITVLEALRHPIQVSR. 351-358 provides a ligand contact to ATP; the sequence is GPPGTGKT. An N6-acetyllysine; alternate modification is found at K490. K490 is modified (N6-succinyllysine; alternate). 2 positions are modified to N6-acetyllysine: K494 and K512.

Belongs to the AAA ATPase family. As to quaternary structure, can form homooligomers. Homodimer formation at the N-terminus may be regulated by ATP and is required for the interaction with the inner surface of the mitochondrial outer membrane and correct mitochondrial homeostasis. Interacts with components of the mitochondrial ribosome and with other proteins involved in mitochondrial RNA metabolism. May also interact with protein involved in lipid metabolism, including STARD9. May interact with FAM210A. Interacts with GADD45GIP1. Interacts with S100B in a Ca(+2)- and Zn(+2)-dependent manner; this interaction probably occurs in the cytosol prior to mitochondrial targeting. S100B could assist ATAD3A cytoplasmic processing, preventing aggregation and favoring mitochondrial localization. Interacts with HSP60/HSPD1. Forms heterooligomers with ATAD3B; this interaction may affect ATAD3A activity. Interacts with CLPB.

Its subcellular location is the mitochondrion inner membrane. It is found in the mitochondrion matrix. It localises to the mitochondrion nucleoid. Functionally, essential for mitochondrial network organization, mitochondrial metabolism and cell growth at organism and cellular level. May play an important role in mitochondrial protein synthesis. May also participate in mitochondrial DNA replication. May bind to mitochondrial DNA D-loops and contribute to nucleoid stability. Required for enhanced channeling of cholesterol for hormone-dependent steroidogenesis. Involved in mitochondrial-mediated antiviral innate immunity. Also involved in the mitochondrial DNA damage response by promoting signaling between damaged genomes and the mitochondrial membrane, leading to activation of the integrated stress response (ISR). In Bos taurus (Bovine), this protein is ATPase family AAA domain-containing protein 3 (ATAD3).